The following is a 446-amino-acid chain: Tubulin alpha chain-like 3 (446 aa).

The short motif at 1–4 is the MREC motif element; sequence MREC. GTP contacts are provided by Q11, E78, S147, G151, T152, T186, N213, and N235. Mg(2+) is bound at residue E78. E261 is an active-site residue.

Belongs to the tubulin family. As to quaternary structure, dimer of alpha and beta chains. A typical microtubule is a hollow water-filled tube with an outer diameter of 25 nm and an inner diameter of 15 nM. Alpha-beta heterodimers associate head-to-tail to form protofilaments running lengthwise along the microtubule wall with the beta-tubulin subunit facing the microtubule plus end conferring a structural polarity. Microtubules usually have 13 protofilaments but different protofilament numbers can be found in some organisms and specialized cells. Requires Mg(2+) as cofactor. In terms of processing, some glutamate residues at the C-terminus are polyglutamylated, resulting in polyglutamate chains on the gamma-carboxyl group. Polyglutamylation plays a key role in microtubule severing by spastin (SPAST). SPAST preferentially recognizes and acts on microtubules decorated with short polyglutamate tails: severing activity by SPAST increases as the number of glutamates per tubulin rises from one to eight, but decreases beyond this glutamylation threshold. Glutamylation is also involved in cilia motility. Post-translationally, some glutamate residues at the C-terminus are monoglycylated but not polyglycylated due to the absence of functional TTLL10 in human. Monoglycylation is mainly limited to tubulin incorporated into cilia and flagella axonemes, which is required for their stability and maintenance. Flagella glycylation controls sperm motility. Both polyglutamylation and monoglycylation can coexist on the same protein on adjacent residues, and lowering glycylation levels increases polyglutamylation, and reciprocally.

It localises to the cytoplasm. The protein resides in the cytoskeleton. The catalysed reaction is GTP + H2O = GDP + phosphate + H(+). Its function is as follows. Tubulin is the major constituent of microtubules, a cylinder consisting of laterally associated linear protofilaments composed of alpha- and beta-tubulin heterodimers. Microtubules grow by the addition of GTP-tubulin dimers to the microtubule end, where a stabilizing cap forms. Below the cap, tubulin dimers are in GDP-bound state, owing to GTPase activity of alpha-tubulin. The protein is Tubulin alpha chain-like 3 (TUBAL3) of Homo sapiens (Human).